Reading from the N-terminus, the 508-residue chain is Pentatricopeptide repeat-containing protein At3g04130, mitochondrial (508 aa).

A mitochondrion-targeting transit peptide spans 1-74 (MSWLIQNRIG…DSEDDVFKRL (74 aa)). PPR repeat units follow at residues 120–150 (SSDA…MRGD), 154–188 (TLNT…GLEK), 189–219 (NTES…LKSH), 223–257 (NAHT…GFRP), 258–292 (CVIS…GSPP), 293–327 (NSIT…GCKP), 328–363 (DSLF…GVSI), 364–398 (NTST…NLCN), 400–434 (DVHT…HHLS), and 436–470 (DEST…DITP).

The protein belongs to the PPR family. P subfamily.

The protein localises to the mitochondrion. The chain is Pentatricopeptide repeat-containing protein At3g04130, mitochondrial from Arabidopsis thaliana (Mouse-ear cress).